Here is a 439-residue protein sequence, read N- to C-terminus: Indole-3-pyruvate monooxygenase YUCCA4 (439 aa).

49 to 54 (GAGPAG) contributes to the FAD binding site. Residue 226–231 (GCGNSG) coordinates NADP(+).

Belongs to the FMO family. It depends on FAD as a cofactor.

It catalyses the reaction indole-3-pyruvate + NADPH + O2 + H(+) = (indol-3-yl)acetate + CO2 + NADP(+) + H2O. Its function is as follows. Involved in auxin biosynthesis in anthers. This Oryza sativa subsp. japonica (Rice) protein is Indole-3-pyruvate monooxygenase YUCCA4.